A 555-amino-acid chain; its full sequence is Formate--tetrahydrofolate ligase (555 aa).

An ATP-binding site is contributed by 65–72 (TPAGEGKS).

Belongs to the formate--tetrahydrofolate ligase family.

It catalyses the reaction (6S)-5,6,7,8-tetrahydrofolate + formate + ATP = (6R)-10-formyltetrahydrofolate + ADP + phosphate. Its pathway is one-carbon metabolism; tetrahydrofolate interconversion. The polypeptide is Formate--tetrahydrofolate ligase (Staphylococcus aureus (strain NCTC 8325 / PS 47)).